Reading from the N-terminus, the 525-residue chain is Light-independent protochlorophyllide reductase subunit B (525 aa).

Residue Asp36 participates in [4Fe-4S] cluster binding. Asp286 serves as the catalytic Proton donor. 421-422 provides a ligand contact to substrate; sequence GL.

This sequence belongs to the ChlB/BchB/BchZ family. In terms of assembly, protochlorophyllide reductase is composed of three subunits; ChlL, ChlN and ChlB. Forms a heterotetramer of two ChlB and two ChlN subunits. Requires [4Fe-4S] cluster as cofactor.

The catalysed reaction is chlorophyllide a + oxidized 2[4Fe-4S]-[ferredoxin] + 2 ADP + 2 phosphate = protochlorophyllide a + reduced 2[4Fe-4S]-[ferredoxin] + 2 ATP + 2 H2O. It functions in the pathway porphyrin-containing compound metabolism; chlorophyll biosynthesis (light-independent). Its function is as follows. Component of the dark-operative protochlorophyllide reductase (DPOR) that uses Mg-ATP and reduced ferredoxin to reduce ring D of protochlorophyllide (Pchlide) to form chlorophyllide a (Chlide). This reaction is light-independent. The NB-protein (ChlN-ChlB) is the catalytic component of the complex. This Prochlorococcus marinus (strain NATL2A) protein is Light-independent protochlorophyllide reductase subunit B.